The following is a 30-amino-acid chain: ALWKSLLKGAGQLVGGVVQHFMGSQGQPES.

In terms of tissue distribution, expressed by the skin glands.

The protein resides in the secreted. Has antimicrobial activity. In Phasmahyla jandaia (Jandaia leaf frog), this protein is Dermaseptin-J10.